The chain runs to 227 residues: Cytochrome c oxidase subunit 2 (227 aa).

At 1–14 (MAYPFQLGLQDATS) the chain is on the mitochondrial intermembrane side. Residues 15 to 45 (PIMEELMNFHDHTLMIVFLISSLVLYIISLM) form a helical membrane-spanning segment. Over 46–59 (LTTKLTHTSTMDAQ) the chain is Mitochondrial matrix. Residues 60–87 (EVETIWTILPAAILILIALPSLRILYMM) form a helical membrane-spanning segment. At 88 to 227 (DEINNPVLTV…YFENWSASMI (140 aa)) the chain is on the mitochondrial intermembrane side. Residues histidine 161, cysteine 196, glutamate 198, cysteine 200, histidine 204, and methionine 207 each contribute to the Cu cation site. Glutamate 198 provides a ligand contact to Mg(2+). At tyrosine 218 the chain carries Phosphotyrosine.

It belongs to the cytochrome c oxidase subunit 2 family. In terms of assembly, component of the cytochrome c oxidase (complex IV, CIV), a multisubunit enzyme composed of 14 subunits. The complex is composed of a catalytic core of 3 subunits MT-CO1, MT-CO2 and MT-CO3, encoded in the mitochondrial DNA, and 11 supernumerary subunits COX4I, COX5A, COX5B, COX6A, COX6B, COX6C, COX7A, COX7B, COX7C, COX8 and NDUFA4, which are encoded in the nuclear genome. The complex exists as a monomer or a dimer and forms supercomplexes (SCs) in the inner mitochondrial membrane with NADH-ubiquinone oxidoreductase (complex I, CI) and ubiquinol-cytochrome c oxidoreductase (cytochrome b-c1 complex, complex III, CIII), resulting in different assemblies (supercomplex SCI(1)III(2)IV(1) and megacomplex MCI(2)III(2)IV(2)). Found in a complex with TMEM177, COA6, COX18, COX20, SCO1 and SCO2. Interacts with TMEM177 in a COX20-dependent manner. Interacts with COX20. Interacts with COX16. Cu cation serves as cofactor.

Its subcellular location is the mitochondrion inner membrane. It catalyses the reaction 4 Fe(II)-[cytochrome c] + O2 + 8 H(+)(in) = 4 Fe(III)-[cytochrome c] + 2 H2O + 4 H(+)(out). Component of the cytochrome c oxidase, the last enzyme in the mitochondrial electron transport chain which drives oxidative phosphorylation. The respiratory chain contains 3 multisubunit complexes succinate dehydrogenase (complex II, CII), ubiquinol-cytochrome c oxidoreductase (cytochrome b-c1 complex, complex III, CIII) and cytochrome c oxidase (complex IV, CIV), that cooperate to transfer electrons derived from NADH and succinate to molecular oxygen, creating an electrochemical gradient over the inner membrane that drives transmembrane transport and the ATP synthase. Cytochrome c oxidase is the component of the respiratory chain that catalyzes the reduction of oxygen to water. Electrons originating from reduced cytochrome c in the intermembrane space (IMS) are transferred via the dinuclear copper A center (CU(A)) of subunit 2 and heme A of subunit 1 to the active site in subunit 1, a binuclear center (BNC) formed by heme A3 and copper B (CU(B)). The BNC reduces molecular oxygen to 2 water molecules using 4 electrons from cytochrome c in the IMS and 4 protons from the mitochondrial matrix. This chain is Cytochrome c oxidase subunit 2 (MT-CO2), found in Praomys tullbergi (Tullberg's soft-furred rat).